We begin with the raw amino-acid sequence, 326 residues long: Phospho-N-acetylmuramoyl-pentapeptide-transferase (326 aa).

9 consecutive transmembrane segments (helical) span residues 3–23 (ISIS…PAFI), 51–71 (TMGG…LALF), 79–99 (VGMI…DDFL), 115–135 (LALQ…GGDM), 138–158 (VFSY…FWLV), 169–189 (GIDG…GVIA), 195–215 (MDIL…FVFN), 221–243 (VFMG…MALH), and 306–326 (FFFW…LYLM).

The protein belongs to the glycosyltransferase 4 family. MraY subfamily. The cofactor is Mg(2+).

The protein localises to the cell membrane. The catalysed reaction is UDP-N-acetyl-alpha-D-muramoyl-L-alanyl-gamma-D-glutamyl-L-lysyl-D-alanyl-D-alanine + di-trans,octa-cis-undecaprenyl phosphate = Mur2Ac(oyl-L-Ala-gamma-D-Glu-L-Lys-D-Ala-D-Ala)-di-trans,octa-cis-undecaprenyl diphosphate + UMP. It functions in the pathway cell wall biogenesis; peptidoglycan biosynthesis. In terms of biological role, catalyzes the initial step of the lipid cycle reactions in the biosynthesis of the cell wall peptidoglycan: transfers peptidoglycan precursor phospho-MurNAc-pentapeptide from UDP-MurNAc-pentapeptide onto the lipid carrier undecaprenyl phosphate, yielding undecaprenyl-pyrophosphoryl-MurNAc-pentapeptide, known as lipid I. The sequence is that of Phospho-N-acetylmuramoyl-pentapeptide-transferase from Streptococcus pneumoniae (strain ATCC 700669 / Spain 23F-1).